Here is a 329-residue protein sequence, read N- to C-terminus: Malate dehydrogenase (329 aa).

12 to 18 (GAAGQIG) provides a ligand contact to NAD(+). Substrate-binding residues include R95 and R101. Residues N108, Q115, and 132–134 (VGN) contribute to the NAD(+) site. Residues N134 and R165 each contribute to the substrate site. H190 serves as the catalytic Proton acceptor.

The protein belongs to the LDH/MDH superfamily. MDH type 2 family.

It catalyses the reaction (S)-malate + NAD(+) = oxaloacetate + NADH + H(+). In terms of biological role, catalyzes the reversible oxidation of malate to oxaloacetate. This is Malate dehydrogenase from Ralstonia nicotianae (strain ATCC BAA-1114 / GMI1000) (Ralstonia solanacearum).